The chain runs to 216 residues: Somatotropin (216 aa).

The first 26 residues, 1–26, serve as a signal peptide directing secretion; it reads MAAGSWTAGLLAFALLCLPWPQEASA. Residue His-45 coordinates Zn(2+). A disulfide bridge connects residues Cys-78 and Cys-189. Ser-131 carries the phosphoserine modification. Glu-198 is a binding site for Zn(2+). A disulfide bridge connects residues Cys-206 and Cys-214.

Belongs to the somatotropin/prolactin family.

The protein resides in the secreted. In terms of biological role, plays an important role in growth control. Its major role in stimulating body growth is to stimulate the liver and other tissues to secrete IGF1. It stimulates both the differentiation and proliferation of myoblasts. It also stimulates amino acid uptake and protein synthesis in muscle and other tissues. This chain is Somatotropin (GH1), found in Oryctolagus cuniculus (Rabbit).